The sequence spans 137 residues: BolA-like protein 1 (137 aa).

A Phosphoserine modification is found at S81. Residues 114 to 137 (WGENSQLDTSPPCLGGNKKTLGTP) are disordered.

The protein belongs to the BolA/IbaG family. In terms of assembly, interacts with GLRX5.

Its subcellular location is the mitochondrion. In terms of biological role, acts as a mitochondrial iron-sulfur (Fe-S) cluster assembly factor that facilitates (Fe-S) cluster insertion into a subset of mitochondrial proteins. Probably acts together with the monothiol glutaredoxin GLRX5. May protect cells against oxidative stress. This Pongo abelii (Sumatran orangutan) protein is BolA-like protein 1 (BOLA1).